Consider the following 402-residue polypeptide: uncharacterized protein (402 aa).

This is an uncharacterized protein from Saccharomyces cerevisiae (strain ATCC 204508 / S288c) (Baker's yeast).